Consider the following 157-residue polypeptide: MSKPFQPISDVINTSPKNKSQSFNEIYGEPENFLEIEVKNPLTHGYGSNLFTDYEIVCRTNIPAFKKRESRIRRRYSDFVAFRKILEQETTRVIIPPLPGKIFLNSNKFNDLNIEKRRQGLEKFLIVVSGHPLLQTGSKSLIEFIQNEKWDPKQIIY.

Residues 1–21 (MSKPFQPISDVINTSPKNKSQ) are disordered. Residues 11–21 (VINTSPKNKSQ) show a composition bias toward polar residues. The region spanning 32-152 (NFLEIEVKNP…EFIQNEKWDP (121 aa)) is the PX domain. Residues arginine 75, serine 77, lysine 101, and arginine 117 each coordinate a 1,2-diacyl-sn-glycero-3-phospho-(1D-myo-inositol-3-phosphate).

The protein belongs to the sorting nexin family.

The protein localises to the cytoplasm. It localises to the golgi apparatus membrane. Its subcellular location is the prevacuolar compartment membrane. In terms of biological role, required for retention of late Golgi membrane proteins. Component of the retrieval machinery that functions by direct interaction with the cytosolic tails of certain TGN membrane proteins during the sorting/budding process at the prevacuolar compartment. Binds phosphatidylinositol 3-phosphate (PtdIns(P3)). The polypeptide is Sorting nexin-3 (SNX3) (Candida albicans (strain SC5314 / ATCC MYA-2876) (Yeast)).